The primary structure comprises 373 residues: Transcription factor NF-E2 45 kDa subunit (373 aa).

2 disordered regions span residues methionine 1 to glycine 22 and leucine 40 to leucine 60. The interval methionine 1–tyrosine 83 is required for interaction with MAPK8. The transactivation domain stretch occupies residues methionine 1 to glutamate 206. 2 short sequence motifs (PXY motif) span residues proline 61–tyrosine 65 and proline 79–tyrosine 83. Residues leucine 131–threonine 163 form a disordered region. Phosphoserine; by MAPK8 is present on serine 157. The residue at position 170 (serine 170) is a Phosphoserine; by PKA. The segment at glutamate 206–arginine 225 is disordered. In terms of domain architecture, bZIP spans leucine 266 to leucine 329. A basic motif region spans residues arginine 268–lysine 287. The tract at residues isoleucine 291–leucine 298 is leucine-zipper. Lysine 368 participates in a covalent cross-link: Glycyl lysine isopeptide (Lys-Gly) (interchain with G-Cter in SUMO); alternate. Lysine 368 participates in a covalent cross-link: Glycyl lysine isopeptide (Lys-Gly) (interchain with G-Cter in SUMO1); alternate.

This sequence belongs to the bZIP family. CNC subfamily. As to quaternary structure, homodimer; can bind DNA as a homodimer. Erythroid transcription activator nuclear factor erythroid-derived 2 (NF-E2), composed of a heterodimer of NFE2 and MAFK, possesses transactivation activity on beta-globin. Also forms high affinity heterodimer with MAFG; the interaction promotes erythropoiesis. Interacts (via the PXY motif 1) with ITCH (via the WW 1 domain); the interaction promotes 'Lys63'-linked ubiquitination of NFE2, translocates it to the cytoplasm and inhibits its transactivation activity. Interacts with KMT2D/MLL2; the interaction promotes transactivation of the beta-globin locus. Interacts with MAPK8 (phosphorylated form); the interaction leads to phosphorylation of NFE2 in undifferentiated cells. In terms of processing, phosphorylated on serine residues. In undifferentiated erythrocytes, phosphorylated by MAPK8 which then leads to ubiquitination and protein degradation. Sumoylated. Sumoylation is required for translocation to nuclear bodies PODs, anchoring to the gene loci, and transactivation of the beta-globin gene. Post-translationally, ubiquitinated mainly by 'Lys63'-linked ubiquitin. Polyubiquitination with 'Lys63'-linked ubiquitin by ITCH retains NFE2 in the cytoplasm preventing its transactivation activity. In undifferentiated erythrocyte, ubiquitinated after MAPK8-mediatd phosphorylation leading to protein degradation.

The protein resides in the nucleus. It is found in the PML body. Its subcellular location is the cytoplasm. In terms of biological role, component of the NF-E2 complex essential for regulating erythroid and megakaryocytic maturation and differentiation. Binds to the hypersensitive site 2 (HS2) of the beta-globin control region (LCR). This subunit (NFE2) recognizes the TCAT/C sequence of the AP-1-like core palindrome present in a number of erythroid and megakaryocytic gene promoters. Requires MAFK or other small MAF proteins for binding to the NF-E2 motif. May play a role in all aspects of hemoglobin production from globin and heme synthesis to procurement of iron. This is Transcription factor NF-E2 45 kDa subunit (Nfe2) from Rattus norvegicus (Rat).